The following is an 800-amino-acid chain: U4/U6.U5 tri-snRNP-associated protein 1 (800 aa).

The tract at residues 1 to 120 is disordered; sequence MGSSKKHRGE…SSGDASSLSI (120 aa). Residues 32–42 show a composition bias toward basic residues; that stretch reads HREHKKHKHRS. Over residues 58–101 the composition is skewed to basic and acidic residues; it reads ERGGERGSGRRGAEAEARSSTHGRERSQAEPSERRVKREKRDDG. Over residues 104–119 the composition is skewed to low complexity; sequence AAASSKTSSGDASSLS. Glycyl lysine isopeptide (Lys-Gly) (interchain with G-Cter in SUMO2) cross-links involve residues Lys125 and Lys133. Lys141 participates in a covalent cross-link: Glycyl lysine isopeptide (Lys-Gly) (interchain with G-Cter in SUMO1); alternate. Residue Lys141 forms a Glycyl lysine isopeptide (Lys-Gly) (interchain with G-Cter in SUMO2); alternate linkage. Glycyl lysine isopeptide (Lys-Gly) (interchain with G-Cter in SUMO2) cross-links involve residues Lys147 and Lys188. Residues 157-231 are a coiled coil; it reads NPMALRQREE…KLLEEMDQEF (75 aa). Thr189 is modified (phosphothreonine). A Glycyl lysine isopeptide (Lys-Gly) (interchain with G-Cter in SUMO2) cross-link involves residue Lys277. A disordered region spans residues 311 to 330; that stretch reads PDYLPYAEDESVDDLAQQKP. Ser321 bears the Phosphoserine mark. Residues Lys329 and Lys336 each participate in a glycyl lysine isopeptide (Lys-Gly) (interchain with G-Cter in SUMO2) cross-link. Ser348 is modified (phosphoserine). Residue Thr392 is modified to Phosphothreonine. Glycyl lysine isopeptide (Lys-Gly) (interchain with G-Cter in SUMO2) cross-links involve residues Lys400 and Lys414. The interval 419–497 is disordered; it reads RADDLLPLGD…QVLEEDEAEL (79 aa). Thr430 is subject to Phosphothreonine. Phosphoserine is present on residues Ser448, Ser474, Ser486, and Ser521. Residues 490 to 533 are a coiled coil; that stretch reads LEEDEAELELQKQLEKGRRLRQLQQLQQLRDSGEKVVEIVKKLE. Residue Lys548 forms a Glycyl lysine isopeptide (Lys-Gly) (interchain with G-Cter in SUMO2) linkage. The segment at 571 to 604 is disordered; sequence LAGNREEQEELMDFERDEERSANGGSESDGEENI. Phosphoserine is present on residues Ser591, Ser596, Ser598, and Ser621. Residues Lys648, Lys657, and Lys684 each participate in a glycyl lysine isopeptide (Lys-Gly) (interchain with G-Cter in SUMO2) cross-link. Thr695 carries the post-translational modification Phosphothreonine. Residues Lys699, Lys709, Lys723, Lys749, and Lys758 each participate in a glycyl lysine isopeptide (Lys-Gly) (interchain with G-Cter in SUMO2) cross-link. Ser761 carries the phosphoserine modification. Thr764 carries the phosphothreonine modification. Glycyl lysine isopeptide (Lys-Gly) (interchain with G-Cter in SUMO2) cross-links involve residues Lys775 and Lys780. Phosphoserine is present on Ser789. Residue Lys791 forms a Glycyl lysine isopeptide (Lys-Gly) (interchain with G-Cter in SUMO2) linkage.

The protein belongs to the SNU66/SART1 family. Identified in the spliceosome C complex. Component of the U4/U6-U5 tri-snRNP complex composed of the U4, U6 and U5 snRNAs and at least PRPF3, PRPF4, PRPF6, PRPF8, PRPF31, SNRNP200, TXNL4A, SNRNP40, DDX23, CD2BP2, PPIH, SNU13, EFTUD2, SART1 and USP39. Interacts with UBL5. Interacts with IVNS1ABP (via Kelch repeats). Post-translationally, sumoylated with SUMO2. Ubiquitously expressed.

It is found in the nucleus. Plays a role in mRNA splicing as a component of the U4/U6-U5 tri-snRNP, one of the building blocks of the spliceosome. May also bind to DNA. In Homo sapiens (Human), this protein is U4/U6.U5 tri-snRNP-associated protein 1 (SART1).